We begin with the raw amino-acid sequence, 51 residues long: uncharacterized protein (51 aa).

This protein is non-essential for virus function. This is an uncharacterized protein from Sulfolobus spindle-shape virus 1 (SSV1).